Here is a 321-residue protein sequence, read N- to C-terminus: Putative zinc finger CCCH domain-containing protein 9 (321 aa).

2 disordered regions span residues 1–59 (MADA…PGKK) and 181–269 (REAE…NLQE). Positions 10–29 (EAERRSDETESRSIKEPKEK) are enriched in basic and acidic residues. Residues 55–83 (RPGKKDCQFYLKNGLCRYRSSCRFNHPTQ) form a C3H1-type zinc finger. Residues 164 to 290 (TEWRFERERM…EARLRLEQIR (127 aa)) are a coiled coil. Basic and acidic residues-rich tracts occupy residues 181-224 (REAE…REAQ) and 231-244 (RQRD…REAQ).

This is Putative zinc finger CCCH domain-containing protein 9 from Arabidopsis thaliana (Mouse-ear cress).